Reading from the N-terminus, the 429-residue chain is Cytochrome bc1 complex Rieske iron-sulfur subunit (429 aa).

The tract at residues 1–45 (MSRADDDAVGVPPTCGGRSDEEERRIVPGPNPQDGAKDGAKATAV) is disordered. The next 3 helical transmembrane spans lie at 96 to 116 (VAVW…IFLF), 137 to 157 (PLYG…AVLY), and 207 to 227 (FGVG…GGLI). The Rieske domain maps to 316-410 (RNPVMLIRIK…ITIDTDGYLV (95 aa)). [2Fe-2S] cluster is bound by residues C353, H355, C372, and H375. Cysteines 358 and 374 form a disulfide.

It belongs to the Rieske iron-sulfur protein family. The cytochrome bc1 complex is composed of a cytochrome b (QcrB), the Rieske iron-sulfur protein (QcrA) and a diheme cytochrome c (QcrC) subunit. It depends on [2Fe-2S] cluster as a cofactor.

The protein localises to the cell membrane. In terms of biological role, iron-sulfur subunit of the cytochrome bc1 complex, an essential component of the respiratory electron transport chain required for ATP synthesis. The bc1 complex catalyzes the oxidation of menaquinol and the reduction of cytochrome c in the respiratory chain. The bc1 complex operates through a Q-cycle mechanism that couples electron transfer to generation of the proton gradient that drives ATP synthesis. This Mycobacterium bovis (strain ATCC BAA-935 / AF2122/97) protein is Cytochrome bc1 complex Rieske iron-sulfur subunit (qcrA).